A 242-amino-acid chain; its full sequence is Venom nerve growth factor 1 (242 aa).

A signal peptide spans 1–18 (MSMLCYTLIIAFLIGIWA). A propeptide spanning residues 19 to 125 (APKSEDNVPL…ALNRNIRSKR (107 aa)) is cleaved from the precursor. The segment at 26–69 (VPLGSPATSDLSDTSCAQTHKALKTSRNTDQRHPAPKKAEDQEL) is disordered. A compositionally biased stretch (polar residues) spans 31 to 43 (PATSDLSDTSCAQ). The segment covering 52–66 (RNTDQRHPAPKKAED) has biased composition (basic and acidic residues). Cystine bridges form between cysteine 139-cysteine 203, cysteine 181-cysteine 231, and cysteine 191-cysteine 233. Residue asparagine 147 is glycosylated (N-linked (GlcNAc...) asparagine).

The protein belongs to the NGF-beta family. In terms of assembly, homodimer; non-covalently linked. In terms of tissue distribution, expressed by the venom gland.

Its subcellular location is the secreted. Its function is as follows. Nerve growth factor is important for the development and maintenance of the sympathetic and sensory nervous systems. It stimulates division and differentiation of sympathetic and embryonic sensory neurons as well as basal forebrain cholinergic neurons in the brain. Its relevance in the snake venom is not clear. However, it has been shown to inhibit metalloproteinase-dependent proteolysis of platelet glycoprotein Ib alpha, suggesting a metalloproteinase inhibition to prevent metalloprotease autodigestion and/or protection against prey proteases. Binds a lipid between the two protein chains in the homodimer. The lipid-bound form promotes histamine relase from mouse mast cells, contrary to the lipid-free form. This Demansia vestigiata (Lesser black whip snake) protein is Venom nerve growth factor 1.